We begin with the raw amino-acid sequence, 264 residues long: Movement protein (264 aa).

The tract at residues 211-264 is disordered; sequence RTKSSKRGPKNNNNLGKGRSGGRPKPKSVDEVEEEFDNLIEDEAETSVADSDSY. Residues 241 to 255 are compositionally biased toward acidic residues; the sequence is EVEEEFDNLIEDEAE.

It belongs to the tobamovirus movement protein family. In terms of assembly, binds to host RBCS at the plasmodesmata; this interaction seems required for viral systemic movement. In resistant plants, interacts with host MBP2C at host microtubules; this interaction prevents virus cell to cell movement. In resistant plants, interacts with host resistance (R) protein (e.g. tomato ToMV resistance protein TM-2(2), AC Q71BG9) at the host plasma membrane; this interaction triggers host defense responses leading to programmed cell death.

It localises to the host cytoplasm. The protein localises to the host cytoskeleton. It is found in the host cell junction. The protein resides in the host plasmodesma. Its function is as follows. Transports viral genome to neighboring plant cells directly through plasmosdesmata, without any budding. The movement protein allows efficient cell to cell propagation, by bypassing the host cell wall barrier. Forms a ribonucleoprotein complex with viral RNA. Binds microtubules and modulates microtubule stability. Can bind double-stranded DNA. Triggers host hypersensitive defense reaction in incompatible plants harboring resistance (R) proteins. The polypeptide is Movement protein (MP) (Antirrhinum majus (Garden snapdragon)).